The sequence spans 244 residues: Putative ribosomal recycling factor, mitochondrial (244 aa).

Belongs to the RRF family.

It is found in the mitochondrion. Its function is as follows. Necessary for protein synthesis in mitochondria. Functions as a ribosome recycling factor in mitochondria. The chain is Putative ribosomal recycling factor, mitochondrial (rrf1) from Schizosaccharomyces pombe (strain 972 / ATCC 24843) (Fission yeast).